Consider the following 589-residue polypeptide: Aspartate--tRNA(Asp/Asn) ligase (589 aa).

Glu-172 is an L-aspartate binding site. Residues 196-199 (QLFK) are aspartate. Residue Arg-218 participates in L-aspartate binding. Residues 218-220 (RDE) and Gln-227 each bind ATP. Residue His-449 participates in L-aspartate binding. Glu-483 provides a ligand contact to ATP. Arg-490 is a binding site for L-aspartate. 535-538 (GVDR) provides a ligand contact to ATP.

It belongs to the class-II aminoacyl-tRNA synthetase family. Type 1 subfamily. Homodimer.

Its subcellular location is the cytoplasm. The catalysed reaction is tRNA(Asx) + L-aspartate + ATP = L-aspartyl-tRNA(Asx) + AMP + diphosphate. Its function is as follows. Aspartyl-tRNA synthetase with relaxed tRNA specificity since it is able to aspartylate not only its cognate tRNA(Asp) but also tRNA(Asn). Reaction proceeds in two steps: L-aspartate is first activated by ATP to form Asp-AMP and then transferred to the acceptor end of tRNA(Asp/Asn). This is Aspartate--tRNA(Asp/Asn) ligase from Francisella philomiragia subsp. philomiragia (strain ATCC 25017 / CCUG 19701 / FSC 153 / O#319-036).